A 516-amino-acid chain; its full sequence is Probable serine/threonine-protein kinase ECU02_0550 (516 aa).

The 227-residue stretch at 4 to 230 (YKLRQVIGEG…ASEALMHRSF (227 aa)) folds into the Protein kinase domain. Residues 10–18 (IGEGASSTV) and K32 each bind ATP. The active-site Proton acceptor is the D120.

Belongs to the protein kinase superfamily. CAMK Ser/Thr protein kinase family.

It catalyses the reaction L-seryl-[protein] + ATP = O-phospho-L-seryl-[protein] + ADP + H(+). It carries out the reaction L-threonyl-[protein] + ATP = O-phospho-L-threonyl-[protein] + ADP + H(+). In Encephalitozoon cuniculi (strain GB-M1) (Microsporidian parasite), this protein is Probable serine/threonine-protein kinase ECU02_0550.